We begin with the raw amino-acid sequence, 101 residues long: Putative monooxygenase Rv0793 (101 aa).

The region spanning 5–93 (VAVIARFMPR…LTRPVAVTVL (89 aa)) is the ABM domain.

As to quaternary structure, homodimer.

In terms of biological role, putative monooygenase that might be involved in antibiotic biosynthesis, or may act as reactive oxygen species scavenger that could help in evading host defenses. The protein is Putative monooxygenase Rv0793 of Mycobacterium tuberculosis (strain ATCC 25618 / H37Rv).